Here is a 414-residue protein sequence, read N- to C-terminus: Isocitrate dehydrogenase [NADP] cytoplasmic (414 aa).

An N-acetylserine modification is found at Ser-2. A Phosphotyrosine modification is found at Tyr-42. Residue 75 to 77 participates in NADP(+) binding; sequence TIT. Thr-77 is a binding site for substrate. Lys-81 is subject to N6-acetyllysine. Arg-82 is an NADP(+) binding site. Substrate contacts are provided by residues 94-100 and Arg-109; that span reads SPNGTIR. Lys-126 is subject to N6-succinyllysine. The substrate site is built by Arg-132 and Lys-212. An N6-acetyllysine mark is found at Lys-224 and Lys-233. Asp-252 contributes to the Mn(2+) binding site. NADP(+) is bound at residue Lys-260. 2 residues coordinate Mn(2+): Asp-275 and Asp-279. 310–315 serves as a coordination point for NADP(+); that stretch reads GTVTRH. Lys-321 is subject to N6-acetyllysine. Asn-328 contributes to the NADP(+) binding site. Phosphoserine is present on Ser-389. Residue Lys-400 is modified to N6-succinyllysine.

This sequence belongs to the isocitrate and isopropylmalate dehydrogenases family. As to quaternary structure, homodimer. Mg(2+) serves as cofactor. Mn(2+) is required as a cofactor. Post-translationally, acetylation at Lys-374 dramatically reduces catalytic activity. In terms of tissue distribution, expressed preferentially in corneal epithelium. Constitute approximately 13% of the total soluble bovine corneal epithelial proteins.

It localises to the cytoplasm. Its subcellular location is the cytosol. The catalysed reaction is D-threo-isocitrate + NADP(+) = 2-oxoglutarate + CO2 + NADPH. Its function is as follows. Catalyzes the NADP(+)-dependent oxidative decarboxylation of isocitrate (D-threo-isocitrate) to 2-ketoglutarate (2-oxoglutarate), which is required by other enzymes such as the phytanoyl-CoA dioxygenase. Plays a critical role in the generation of NADPH, an important cofactor in many biosynthesis pathways. May act as a corneal epithelial crystallin and may be involved in maintaining corneal epithelial transparency. This is Isocitrate dehydrogenase [NADP] cytoplasmic (IDH1) from Bos taurus (Bovine).